We begin with the raw amino-acid sequence, 349 residues long: Flap endonuclease 1 (349 aa).

The interval 1–98 is N-domain; the sequence is MDLGEIVEDV…EEIERRKRAK (98 aa). Residues D27, D80, E152, E154, D173, D175, and D236 each coordinate Mg(2+). An I-domain region spans residues 116–258; the sequence is EIRKYAQAAV…TALRIIKKYN (143 aa). Positions 341–349 are interaction with PCNA; the sequence is KQTGLDQWF.

This sequence belongs to the XPG/RAD2 endonuclease family. FEN1 subfamily. Interacts with PCNA. PCNA stimulates the nuclease activity without altering cleavage specificity. Mg(2+) is required as a cofactor.

Structure-specific nuclease with 5'-flap endonuclease and 5'-3' exonuclease activities involved in DNA replication and repair. During DNA replication, cleaves the 5'-overhanging flap structure that is generated by displacement synthesis when DNA polymerase encounters the 5'-end of a downstream Okazaki fragment. Binds the unpaired 3'-DNA end and kinks the DNA to facilitate 5' cleavage specificity. Cleaves one nucleotide into the double-stranded DNA from the junction in flap DNA, leaving a nick for ligation. Also involved in the base excision repair (BER) pathway. Acts as a genome stabilization factor that prevents flaps from equilibrating into structures that lead to duplications and deletions. Also possesses 5'-3' exonuclease activity on nicked or gapped double-stranded DNA. In Sulfolobus acidocaldarius (strain ATCC 33909 / DSM 639 / JCM 8929 / NBRC 15157 / NCIMB 11770), this protein is Flap endonuclease 1.